A 177-amino-acid chain; its full sequence is MSRVGKMPIALPSGAEATITAAQITVKGPLGSLTQSLNGLVNIENDNGTLNFKVANDSREANAMSGTLRALVNNMVNGVTKGFEKKLTLVGVGYRAAAQGDKLNLSLGFSHPVVHQMPQGVKVETPTQTEILIKGIDRQKVGQVAAEVRAYREPEPYKGKGVRYSDEVVVIKETKKK.

The protein belongs to the universal ribosomal protein uL6 family. As to quaternary structure, part of the 50S ribosomal subunit.

This protein binds to the 23S rRNA, and is important in its secondary structure. It is located near the subunit interface in the base of the L7/L12 stalk, and near the tRNA binding site of the peptidyltransferase center. This Janthinobacterium sp. (strain Marseille) (Minibacterium massiliensis) protein is Large ribosomal subunit protein uL6.